A 193-amino-acid chain; its full sequence is Orotate phosphoribosyltransferase (193 aa).

5-phospho-alpha-D-ribose 1-diphosphate is bound by residues arginine 85, lysine 89, histidine 91, and 111-119; that span reads DDVLTTGKS. Orotate-binding residues include threonine 115 and arginine 143.

The protein belongs to the purine/pyrimidine phosphoribosyltransferase family. PyrE subfamily. As to quaternary structure, homodimer. The cofactor is Mg(2+).

It carries out the reaction orotidine 5'-phosphate + diphosphate = orotate + 5-phospho-alpha-D-ribose 1-diphosphate. Its pathway is pyrimidine metabolism; UMP biosynthesis via de novo pathway; UMP from orotate: step 1/2. In terms of biological role, catalyzes the transfer of a ribosyl phosphate group from 5-phosphoribose 1-diphosphate to orotate, leading to the formation of orotidine monophosphate (OMP). This Pyrobaculum islandicum (strain DSM 4184 / JCM 9189 / GEO3) protein is Orotate phosphoribosyltransferase.